We begin with the raw amino-acid sequence, 185 residues long: Ribosome-recycling factor (185 aa).

This sequence belongs to the RRF family.

Its subcellular location is the cytoplasm. Responsible for the release of ribosomes from messenger RNA at the termination of protein biosynthesis. May increase the efficiency of translation by recycling ribosomes from one round of translation to another. The polypeptide is Ribosome-recycling factor (Nitrosomonas europaea (strain ATCC 19718 / CIP 103999 / KCTC 2705 / NBRC 14298)).